The chain runs to 420 residues: Vacuolar amino acid transporter 5 (420 aa).

Over 1–19 the chain is Cytoplasmic; the sequence is MSGYSPLSSGPADVHIGKA. A helical membrane pass occupies residues 20–40; sequence GFFSSVINLANTILGAGILSL. At 41 to 49 the chain is on the vacuolar side; it reads PNAFTKTGL. Residues 50–70 traverse the membrane as a helical segment; the sequence is LFGCLTIVFSAFASFLGLYFV. Over 71–96 the chain is Cytoplasmic; the sequence is SQCAARLPRGKASFAAVAKHTFPSLA. A helical transmembrane segment spans residues 97–117; sequence VVFDASIAVKCFGVAVSYLVI. Topologically, residues 118–141 are vacuolar; that stretch reads VGDLMPQIAPSLGLSSPMFLRRQT. Residues 142 to 162 form a helical membrane-spanning segment; the sequence is WIVFALFVLTPLSFLKRLDSL. At 163–166 the chain is on the cytoplasmic side; the sequence is RHTS. Residues 167–187 traverse the membrane as a helical segment; that stretch reads VISLIALCYLVFIVLYHFIIG. Residues 188–195 are Vacuolar-facing; it reads DTVKGEIR. The helical transmembrane segment at 196–216 threads the bilayer; sequence YFVPESGFGYLSVLPVFVFGF. The Cytoplasmic portion of the chain corresponds to 217-240; that stretch reads TCHQNAFSVINEVRNFSQGFVNFT. A helical transmembrane segment spans residues 241–261; it reads MFTAIISSTLLYLLVAITGYL. At 262–278 the chain is on the vacuolar side; sequence SFGSLASGNIIAMYDNT. A helical transmembrane segment spans residues 279 to 299; sequence SIWIIGGKLAIVVLVLFSYPL. The Cytoplasmic portion of the chain corresponds to 300–326; that stretch reads QCHPCRNSVYQAIRRSYSAHDMSDGYH. The helical transmembrane segment at 327–347 threads the bilayer; the sequence is AVITLCILLFTHSLALLLSSL. Topologically, residues 348–349 are vacuolar; sequence EM. The helical transmembrane segment at 350-370 threads the bilayer; it reads VLAFVGSTGSTFISFILPGSL. Over 371–394 the chain is Cytoplasmic; it reads YYFFSHKVASPGNSSPLQLRISRA. A helical transmembrane segment spans residues 395–415; it reads FAAGLAIYGTVVMILCLNINI. Topologically, residues 416–420 are vacuolar; that stretch reads AKLSH.

It belongs to the amino acid/polyamine transporter 2 family.

The protein localises to the vacuole membrane. Functionally, vacuolar amino acid transporter involved in the vacuolar uptake of histidine, glutamate, tyrosine, arginine, lysine, and serine. Required for sporulation. The chain is Vacuolar amino acid transporter 5 (avt5) from Schizosaccharomyces pombe (strain 972 / ATCC 24843) (Fission yeast).